We begin with the raw amino-acid sequence, 315 residues long: Small ribosomal subunit protein uS3 (315 aa).

Residues 38–106 enclose the KH type-2 domain; the sequence is IRKMMSRGME…QVQLNILEVK (69 aa). Residues 211-315 form a disordered region; the sequence is AEREAQEALQ…VANTPEKAEE (105 aa). Basic residues predominate over residues 222–232; it reads QTRRERPRRGP. A compositionally biased stretch (low complexity) spans 265–315; the sequence is APAETPAGEAAATEPTAPVAEPATAAASAPAEAASAPAEAAVANTPEKAEE.

This sequence belongs to the universal ribosomal protein uS3 family. In terms of assembly, part of the 30S ribosomal subunit. Forms a tight complex with proteins S10 and S14.

In terms of biological role, binds the lower part of the 30S subunit head. Binds mRNA in the 70S ribosome, positioning it for translation. In Frankia casuarinae (strain DSM 45818 / CECT 9043 / HFP020203 / CcI3), this protein is Small ribosomal subunit protein uS3.